Here is a 60-residue protein sequence, read N- to C-terminus: Ixodegrin-like peptide (60 aa).

The first 21 residues, M1–A21, serve as a signal peptide directing secretion. A Cell attachment site motif is present at residues R49–D51.

It belongs to the ixodegrin family. In terms of processing, contains 3 disulfide bonds. Expressed in salivary glands.

The protein resides in the secreted. Tick salivary platelet aggregation inhibitor that plays an important part in the anti-hemostatic strategy of ticks. Inhibits platelet aggregation induced by ADP, thrombin and thromboxane A2 (TXA2). Blocks platelet adhesion to soluble collagen (most probably through the binding to alpha-2/beta-1 integrin (ITGA2/ITGB1)) and binds to purified glycoprotein IIb/IIIa (ITGA2B/ITGB3) in a dose-dependent manner. In vivo, reduces thrombus weight effectively in a rat arteriovenous shunt model and inhibits thrombosis in a carrageenan-induced mouse tail thrombosis model. The polypeptide is Ixodegrin-like peptide (Ixodes scapularis (Black-legged tick)).